Reading from the N-terminus, the 20-residue chain is Protein PR-L5 (20 aa).

Belongs to the BetVI family.

The polypeptide is Protein PR-L5 (Lupinus luteus (European yellow lupine)).